The chain runs to 464 residues: Light-independent protochlorophyllide reductase subunit N (464 aa).

[4Fe-4S] cluster-binding residues include cysteine 29, cysteine 54, and cysteine 114.

The protein belongs to the BchN/ChlN family. Protochlorophyllide reductase is composed of three subunits; ChlL, ChlN and ChlB. Forms a heterotetramer of two ChlB and two ChlN subunits. Requires [4Fe-4S] cluster as cofactor.

It is found in the plastid. The protein localises to the chloroplast. It catalyses the reaction chlorophyllide a + oxidized 2[4Fe-4S]-[ferredoxin] + 2 ADP + 2 phosphate = protochlorophyllide a + reduced 2[4Fe-4S]-[ferredoxin] + 2 ATP + 2 H2O. Its pathway is porphyrin-containing compound metabolism; chlorophyll biosynthesis (light-independent). In terms of biological role, component of the dark-operative protochlorophyllide reductase (DPOR) that uses Mg-ATP and reduced ferredoxin to reduce ring D of protochlorophyllide (Pchlide) to form chlorophyllide a (Chlide). This reaction is light-independent. The NB-protein (ChlN-ChlB) is the catalytic component of the complex. The polypeptide is Light-independent protochlorophyllide reductase subunit N (Stigeoclonium helveticum (Green alga)).